A 272-amino-acid polypeptide reads, in one-letter code: 2-succinyl-6-hydroxy-2,4-cyclohexadiene-1-carboxylate synthase (272 aa).

The protein belongs to the AB hydrolase superfamily. MenH family. In terms of assembly, monomer.

It catalyses the reaction 5-enolpyruvoyl-6-hydroxy-2-succinyl-cyclohex-3-ene-1-carboxylate = (1R,6R)-6-hydroxy-2-succinyl-cyclohexa-2,4-diene-1-carboxylate + pyruvate. The protein operates within quinol/quinone metabolism; 1,4-dihydroxy-2-naphthoate biosynthesis; 1,4-dihydroxy-2-naphthoate from chorismate: step 3/7. It functions in the pathway quinol/quinone metabolism; menaquinone biosynthesis. In terms of biological role, catalyzes a proton abstraction reaction that results in 2,5-elimination of pyruvate from 2-succinyl-5-enolpyruvyl-6-hydroxy-3-cyclohexene-1-carboxylate (SEPHCHC) and the formation of 2-succinyl-6-hydroxy-2,4-cyclohexadiene-1-carboxylate (SHCHC). The protein is 2-succinyl-6-hydroxy-2,4-cyclohexadiene-1-carboxylate synthase of Yersinia pseudotuberculosis serotype O:1b (strain IP 31758).